The primary structure comprises 1211 residues: Sterol 3-beta-glucosyltransferase (1211 aa).

Residues 1 to 10 are compositionally biased toward basic and acidic residues; sequence MSQLRPRDSS. The disordered stretch occupies residues 1–61; the sequence is MSQLRPRDSS…DETEAEDDID (61 aa). The region spanning 196–235 is the GRAM 1 domain; the sequence is EKLKTTFDLSDDDEFVNDYPCWLLHEVFLQGHIYITSRYL. In terms of domain architecture, PH spans 248–347; the sequence is VTMSGALSIR…WVTDLRKHIF (100 aa). Disordered stretches follow at residues 422–452 and 500–531; these read LTDS…KLSR and VVPN…PSNW. Residues 423-432 show a composition bias toward acidic residues; the sequence is TDSDSSESDS. Residues 507 to 525 show a composition bias toward basic and acidic residues; it reads SELKQDHAGDAPKDSEEPS. The region spanning 586–652 is the GRAM 2 domain; it reads SRFRKHFSLP…SDIENVYNLK (67 aa). S770, R771, D773, N1046, N1072, V1073, H1075, H1088, S1091, G1092, T1093, D1112, and Q1113 together coordinate UDP-alpha-D-glucose.

Belongs to the glycosyltransferase 28 family.

It localises to the cytoplasm. Its subcellular location is the preautophagosomal structure membrane. The catalysed reaction is a sterol + UDP-alpha-D-glucose = a sterol 3-beta-D-glucoside + UDP + H(+). It carries out the reaction ergosterol + UDP-alpha-D-glucose = ergosteryl 3-beta-D-glucoside + UDP + H(+). Sterol glycosyltransferase responsible for the glycosylation of ergosterol to form ergosterol-glucoside. Shows also activity in vitro on other sterols such as cholesterol, beta-sitosterol, stigmasterol and tomatidine. Probable sterol 3-beta-glucosyltransferase that mediates autophagic degradation of peroxisomes (pexophagy). This is Sterol 3-beta-glucosyltransferase from Komagataella phaffii (strain GS115 / ATCC 20864) (Yeast).